Consider the following 462-residue polypeptide: Probable Xaa-Pro aminopeptidase pepP (462 aa).

Mn(2+)-binding residues include aspartate 259, aspartate 270, glutamate 393, and glutamate 433.

This sequence belongs to the peptidase M24B family. Requires Mn(2+) as cofactor.

The catalysed reaction is Release of any N-terminal amino acid, including proline, that is linked to proline, even from a dipeptide or tripeptide.. In terms of biological role, catalyzes the removal of a penultimate prolyl residue from the N-termini of peptides. The sequence is that of Probable Xaa-Pro aminopeptidase pepP (pepP) from Metarhizium robertsii (strain ARSEF 23 / ATCC MYA-3075) (Metarhizium anisopliae (strain ARSEF 23)).